The following is a 306-amino-acid chain: Olfactory receptor 8G17 (306 aa).

Topologically, residues 1–28 (MEKGNQSTVNKFFLSGLTEQPELQLPLF) are extracellular. Asparagine 5 is a glycosylation site (N-linked (GlcNAc...) asparagine). A helical membrane pass occupies residues 29–49 (LLFLGIYLLTVLGNLGMIILI). At 50 to 56 (LLSSYLH) the chain is on the cytoplasmic side. The chain crosses the membrane as a helical span at residues 57 to 77 (TPMYFFLSSLSFIDFCQSTVI). Over 78–97 (TPKMLVKFVREKNEISYPEC) the chain is Extracellular. The chain crosses the membrane as a helical span at residues 98–118 (ITQLCFFVIFAVSESYMLAAM). The Cytoplasmic segment spans residues 119-143 (AYDRYVAICSPLLYSSIMSQHKCLS). The chain crosses the membrane as a helical span at residues 144–164 (LVLGVYILGIVCASAHVGCIF). Over 165-196 (RIDFCKSDLINHYFCDLISILNLSCSNIFVND) the chain is Extracellular. A helical transmembrane segment spans residues 197 to 217 (LVILIFSLINTIFPTLTILSS). Topologically, residues 218-236 (YAFIIISILRIKSTEGRSK) are cytoplasmic. Residues 237 to 257 (AFSTCSSHISAVAIFYISAGF) form a helical membrane-spanning segment. Over 258-271 (TYLNPSSSHSMDEG) the chain is Extracellular. Residues 272–292 (KVSSIFYTIIVPMLNPLIYSL) traverse the membrane as a helical segment. The Cytoplasmic portion of the chain corresponds to 293–306 (RNKDVKIALKKMIE).

It belongs to the G-protein coupled receptor 1 family.

The protein localises to the cell membrane. Odorant receptor. This Mus musculus (Mouse) protein is Olfactory receptor 8G17.